A 371-amino-acid chain; its full sequence is Queuine tRNA-ribosyltransferase (371 aa).

Asp90 functions as the Proton acceptor in the catalytic mechanism. Substrate is bound by residues 90-94, Asp144, Gln188, and Gly215; that span reads DSGGF. The tract at residues 246–252 is RNA binding; it reads GVGTPED. The active-site Nucleophile is the Asp265. Residues 270–274 form an RNA binding; important for wobble base 34 recognition region; the sequence is TRNAR. Zn(2+)-binding residues include Cys303, Cys305, Cys308, and His334.

This sequence belongs to the queuine tRNA-ribosyltransferase family. As to quaternary structure, homodimer. Within each dimer, one monomer is responsible for RNA recognition and catalysis, while the other monomer binds to the replacement base PreQ1. Requires Zn(2+) as cofactor.

It carries out the reaction 7-aminomethyl-7-carbaguanine + guanosine(34) in tRNA = 7-aminomethyl-7-carbaguanosine(34) in tRNA + guanine. The protein operates within tRNA modification; tRNA-queuosine biosynthesis. Catalyzes the base-exchange of a guanine (G) residue with the queuine precursor 7-aminomethyl-7-deazaguanine (PreQ1) at position 34 (anticodon wobble position) in tRNAs with GU(N) anticodons (tRNA-Asp, -Asn, -His and -Tyr). Catalysis occurs through a double-displacement mechanism. The nucleophile active site attacks the C1' of nucleotide 34 to detach the guanine base from the RNA, forming a covalent enzyme-RNA intermediate. The proton acceptor active site deprotonates the incoming PreQ1, allowing a nucleophilic attack on the C1' of the ribose to form the product. After dissociation, two additional enzymatic reactions on the tRNA convert PreQ1 to queuine (Q), resulting in the hypermodified nucleoside queuosine (7-(((4,5-cis-dihydroxy-2-cyclopenten-1-yl)amino)methyl)-7-deazaguanosine). The chain is Queuine tRNA-ribosyltransferase from Neisseria meningitidis serogroup A / serotype 4A (strain DSM 15465 / Z2491).